We begin with the raw amino-acid sequence, 576 residues long: uncharacterized protein (576 aa).

A signal peptide spans 1 to 28 (MLRLNGLRVLLRTLAAIGALLTTASASA). Ser-185 serves as the catalytic Acyl-ester intermediate. Cystine bridges form between Cys-252/Cys-269 and Cys-278/Cys-286. Ca(2+) contacts are provided by Asp-253, Asp-256, Asp-260, and Val-262. Catalysis depends on charge relay system residues Asp-414 and His-464. Cys-529 and Cys-551 form a disulfide bridge.

This sequence belongs to the tannase family.

This is an uncharacterized protein from Xanthomonas campestris pv. campestris (strain ATCC 33913 / DSM 3586 / NCPPB 528 / LMG 568 / P 25).